The following is a 323-amino-acid chain: Olfactory receptor 52B2 (323 aa).

Over 1–27 the chain is Extracellular; it reads MSHTNVTIFHPAVFVLPGIPGLEAYHI. Asn-5 carries an N-linked (GlcNAc...) asparagine glycan. Residues 28–48 traverse the membrane as a helical segment; the sequence is WLSIPLCLIYITAVLGNSILI. The Cytoplasmic segment spans residues 49-56; it reads VVIVMERN. Residues 57–77 form a helical membrane-spanning segment; that stretch reads LHVPMYFFLSMLAVMDILLST. Residues 78–101 lie on the Extracellular side of the membrane; the sequence is TTVPKALAIFWLQAHNIAFDACVT. The cysteines at positions 99 and 191 are disulfide-linked. A helical transmembrane segment spans residues 102-122; it reads QGFFVHMMFVGESAILLAMAF. Residues 123 to 141 lie on the Cytoplasmic side of the membrane; that stretch reads DRFVAICAPLRYTTVLTWP. Residues 142 to 162 traverse the membrane as a helical segment; sequence VVGRIALAVITRSFCIIFPVI. The Extracellular segment spans residues 163-198; the sequence is FLLKRLPFCLTNIVPHSYCEHIGVARLACADITVNI. Residues 199–219 traverse the membrane as a helical segment; that stretch reads WYGFSVPIVMVILDVILIAVS. Topologically, residues 220–239 are cytoplasmic; it reads YSLILRAVFRLPSQDARHKA. The chain crosses the membrane as a helical span at residues 240–260; sequence LSTCGSHLCVILMFYVPSFFT. At 261–275 the chain is on the extracellular side; it reads LLTHHFGRNIPQHVH. The chain crosses the membrane as a helical span at residues 276 to 296; it reads ILLANLYVAVPPMLNPIVYGV. At 297–323 the chain is on the cytoplasmic side; it reads KTKQIREGVAHRFFDIKTWCCTSPLGS.

Belongs to the G-protein coupled receptor 1 family.

It localises to the cell membrane. Odorant receptor. The chain is Olfactory receptor 52B2 (OR52B2) from Homo sapiens (Human).